Reading from the N-terminus, the 777-residue chain is Glucocorticoid receptor (777 aa).

The segment covering 1-14 (MDSKESLTPGREEN) has biased composition (basic and acidic residues). The disordered stretch occupies residues 1–23 (MDSKESLTPGREENPSSVLAQER). The tract at residues 1–420 (MDSKESLTPG…TATTGPPPKL (420 aa)) is modulating. At Thr8 the chain carries Phosphothreonine. An Omega-N-methylarginine modification is found at Arg23. Ser45, Ser113, Ser134, and Ser141 each carry phosphoserine. Residues 130–140 (NRSTSVPENPK) are compositionally biased toward polar residues. The interval 130–183 (NRSTSVPENPKSSASTAVSAAPTEKEFPKTHSDISSEQQHLKGQTGTNGGNVKL) is disordered. Residues 141 to 150 (SSASTAVSAA) show a composition bias toward low complexity. Residues 152 to 163 (TEKEFPKTHSDI) are compositionally biased toward basic and acidic residues. Over residues 164 to 174 (SSEQQHLKGQT) the composition is skewed to polar residues. Phosphoserine occurs at positions 203, 211, and 226. A Glycyl lysine isopeptide (Lys-Gly) (interchain with G-Cter in SUMO2) cross-link involves residue Lys258. Ser267 carries the post-translational modification Phosphoserine. Glycyl lysine isopeptide (Lys-Gly) (interchain with G-Cter in SUMO); alternate cross-links involve residues Lys277 and Lys293. Residues Lys277 and Lys293 each participate in a glycyl lysine isopeptide (Lys-Gly) (interchain with G-Cter in SUMO2); alternate cross-link. The segment covering 394–414 (SSPSMRPDVSSPPSSSSTATT) has biased composition (low complexity). Positions 394-415 (SSPSMRPDVSSPPSSSSTATTG) are disordered. At Ser404 the chain carries Phosphoserine. Residue Lys419 forms a Glycyl lysine isopeptide (Lys-Gly) (interchain with G-Cter in ubiquitin) linkage. 2 consecutive NR C4-type zinc fingers follow at residues 421–441 (CLVCSDEASGCHYGVLTCGSC) and 457–476 (CAGRNDCIIDKIRRKNCPAC). Residues 421–486 (CLVCSDEASG…RYRKCLQAGM (66 aa)) constitute a DNA-binding region (nuclear receptor). Residues Lys480, Lys492, Lys494, and Lys495 each carry the N6-acetyllysine modification. The tract at residues 485 to 777 (GMNLEARKTK…NIKKLLFHQK (293 aa)) is interaction with CLOCK. The interval 487–523 (NLEARKTKKKIKGIQQATTGVSQETPENPANKTIVPA) is hinge. In terms of domain architecture, NR LBD spans 524–758 (TLPQLTPTLV…FPEMLAEIIT (235 aa)). Residues 532–697 (LVSLLEVIEP…EIRMTYIKEL (166 aa)) are interaction with CRY1. A Glycyl lysine isopeptide (Lys-Gly) (interchain with G-Cter in SUMO) cross-link involves residue Lys703.

It belongs to the nuclear hormone receptor family. NR3 subfamily. As to quaternary structure, heteromultimeric cytoplasmic complex with HSP90AA1, HSPA1A/HSPA1B, and FKBP5 or another immunophilin such as PPID, STIP1, or the immunophilin homolog PPP5C. Upon ligand binding FKBP5 dissociates from the complex and FKBP4 takes its place, thereby linking the complex to dynein and mediating transport to the nucleus, where the complex dissociates. Probably forms a complex composed of chaperones HSP90 and HSP70, co-chaperones CDC37, PPP5C, TSC1 and client protein TSC2, CDK4, AKT, RAF1 and NR3C1; this complex does not contain co-chaperones STIP1/HOP and PTGES3/p23. Directly interacts with UNC45A. Binds to DNA as a homodimer, and as heterodimer with NR3C2 or the retinoid X receptor. Binds STAT5A and STAT5B homodimers and heterodimers. Interacts with NRIP1, POU2F1, POU2F2 and TRIM28. Interacts with several coactivator complexes, including the SMARCA4 complex, CREBBP/EP300, TADA2L (Ada complex) and p160 coactivators such as NCOA2 and NCOA6. Interaction with BAG1 inhibits transactivation. Interacts with HEXIM1 and TGFB1I1. Interacts with NCOA1. Interacts with NCOA3, SMARCA4, SMARCC1, SMARCD1, and SMARCE1. Interacts with CLOCK, CRY1 and CRY2 in a ligand-dependent fashion. Interacts with CIART. Interacts with RWDD3. Interacts with UBE2I/UBC9 and this interaction is enhanced in the presence of RWDD3. Interacts with GRIP1. Interacts with NR4A3 (via nuclear receptor DNA-binding domain), represses transcription activity of NR4A3 on the POMC promoter Nur response element (NurRE). Directly interacts with PNRC2 to attract and form a complex with UPF1 and DCP1A; the interaction leads to rapid mRNA degradation. Interacts with GSK3B. Interacts with FNIP1 and FNIP2. Interacts (via C-terminus) with HNRNPU (via C-terminus). Interacts with MCM3AP. Interacts (via domain NR LBD) with HSP90AA1 and HSP90AB1. In the absence of hormonal ligand, interacts with TACC1. Interacts (via NR LBD domain) with ZNF764 (via KRAB domain); the interaction regulates transcription factor activity of NR3C1 by directing its actions toward certain biologic pathways. Acetylation by CLOCK reduces its binding to glucocorticoid response elements and its transcriptional activity. Post-translationally, increased proteasome-mediated degradation in response to glucocorticoids. In terms of processing, phosphorylated in the absence of hormone; becomes hyperphosphorylated in the presence of glucocorticoid. The Ser-203, Ser-226 and Ser-404-phosphorylated forms are mainly cytoplasmic, and the Ser-211-phosphorylated form is nuclear. Phosphorylation at Ser-211 increases transcriptional activity. Phosphorylation at Ser-203, Ser-226 and Ser-404 decreases signaling capacity. Phosphorylation at Ser-404 may protect from glucocorticoid-induced apoptosis. Phosphorylation at Ser-203 and Ser-211 is not required in regulation of chromosome segregation. May be dephosphorylated by PPP5C, attenuates NR3C1 action. Ubiquitinated by UBR5, leading to its degradation: UBR5 specifically recognizes and binds ligand-bound NR3C1 when it is not associated with coactivators (NCOAs). In presence of NCOAs, the UBR5-degron is not accessible, preventing its ubiquitination and degradation. Post-translationally, sumoylation at Lys-277 and Lys-293 negatively regulates its transcriptional activity. Sumoylation at Lys-703 positively regulates its transcriptional activity in the presence of RWDD3. Sumoylation at Lys-277 and Lys-293 is dispensable whereas sumoylation at Lys-703 is critical for the stimulatory effect of RWDD3 on its transcriptional activity. Heat shock increases sumoylation in a RWDD3-dependent manner.

It localises to the cytoplasm. Its subcellular location is the nucleus. The protein localises to the mitochondrion. It is found in the cytoskeleton. The protein resides in the spindle. It localises to the microtubule organizing center. Its subcellular location is the centrosome. The protein localises to the chromosome. It is found in the nucleoplasm. Receptor for glucocorticoids (GC). Has a dual mode of action: as a transcription factor that binds to glucocorticoid response elements (GRE), both for nuclear and mitochondrial DNA, and as a modulator of other transcription factors. Affects inflammatory responses, cellular proliferation and differentiation in target tissues. Involved in chromatin remodeling. Plays a role in rapid mRNA degradation by binding to the 5' UTR of target mRNAs and interacting with PNRC2 in a ligand-dependent manner which recruits the RNA helicase UPF1 and the mRNA-decapping enzyme DCP1A, leading to RNA decay. Could act as a coactivator for STAT5-dependent transcription upon growth hormone (GH) stimulation and could reveal an essential role of hepatic GR in the control of body growth. Mediates glucocorticoid-induced apoptosis. Promotes accurate chromosome segregation during mitosis. May act as a tumor suppressor. May play a negative role in adipogenesis through the regulation of lipolytic and antilipogenic gene expression. The polypeptide is Glucocorticoid receptor (NR3C1) (Pongo abelii (Sumatran orangutan)).